Consider the following 498-residue polypeptide: Succinate-semialdehyde dehydrogenase [NADP(+)] 1 (498 aa).

Position 247 to 252 (247 to 252 (GSTNVG)) interacts with NAD(+). Catalysis depends on residues Glu-269 and Cys-303.

This sequence belongs to the aldehyde dehydrogenase family. Homotetramer.

It is found in the cytoplasm. It catalyses the reaction succinate semialdehyde + NAD(+) + H2O = succinate + NADH + 2 H(+). The catalysed reaction is succinate semialdehyde + NADP(+) + H2O = succinate + NADPH + 2 H(+). It functions in the pathway amino-acid degradation; 4-aminobutanoate degradation. In terms of biological role, catalyzes the oxidation of succinate semialdehyde to succinate. Can utilize both NAD(+) or NADP(+) as a coenzyme. Functions in a gamma-aminobutyrate (GABA) degradation pathway that allows growth utilizing GABA as a nitrogen source. Functions in the GABA shunt, which allows to bypass 2 reactions in the TCA cycle by removing alpha-ketoglutarate from the cycle and feeding succinate and NADH back into the cycle. The chain is Succinate-semialdehyde dehydrogenase [NADP(+)] 1 (ssd1) from Schizosaccharomyces pombe (strain 972 / ATCC 24843) (Fission yeast).